The primary structure comprises 227 residues: MLDREGFRPNVGIILLNARNEVFWGKRIGEHSWQFPQGGIKYGETPEQAMYRELHEEIGLLPEHVRIVGRTRDWLRYEVPDKFIRREIRGHYKGQKQIWFLLRMAGRDCDIHLRATEHPEFDAWRWSHYWVPLEAVIEFKRDVYQMALTELSRFLNRHPRVPLSPYGTHGAHGAHGVHGRHGGPRGQALSRAQAAQQADADGNAEVPGAADYVSPATPVSTTRSTDD.

A Nudix hydrolase domain is found at 6–149 (GFRPNVGIIL…KRDVYQMALT (144 aa)). A Nudix box motif is present at residues 38–59 (GGIKYGETPEQAMYRELHEEIG). The disordered stretch occupies residues 165-227 (PYGTHGAHGA…PVSTTRSTDD (63 aa)). Low complexity predominate over residues 192 to 201 (AQAAQQADAD). The segment covering 217-227 (TPVSTTRSTDD) has biased composition (polar residues).

It belongs to the Nudix hydrolase family. RppH subfamily. It depends on a divalent metal cation as a cofactor.

Functionally, accelerates the degradation of transcripts by removing pyrophosphate from the 5'-end of triphosphorylated RNA, leading to a more labile monophosphorylated state that can stimulate subsequent ribonuclease cleavage. The polypeptide is RNA pyrophosphohydrolase (Cupriavidus taiwanensis (strain DSM 17343 / BCRC 17206 / CCUG 44338 / CIP 107171 / LMG 19424 / R1) (Ralstonia taiwanensis (strain LMG 19424))).